We begin with the raw amino-acid sequence, 1765 residues long: RANBP2-like and GRIP domain-containing protein 5/6 (1765 aa).

Position 19 is a phosphothreonine (Thr-19). The residue at position 21 (Ser-21) is a Phosphoserine. 3 TPR repeats span residues 26–59 (SMKG…QERD), 60–93 (PKAH…NPTQ), and 648–681 (EDAH…VSYW). Disordered stretches follow at residues 760–804 (GPLY…PRWT) and 924–945 (FGIS…NDTG). The segment covering 778 to 797 (STPSPTKYSLSPSKSYKYSP) has biased composition (low complexity). Positions 931–941 (NQEKKREKPLE) are enriched in basic and acidic residues. One can recognise a RanBD1 1 domain in the interval 1036-1172 (HFEPVVQMPE…FEECQRLLLD (137 aa)). Disordered stretches follow at residues 1214–1247 (KVTE…PTLE) and 1306–1330 (AKLN…EERD). Residues 1235–1244 (IKPNAENTGP) show a composition bias toward polar residues. Acidic residues predominate over residues 1317 to 1329 (TDEESVVTQEEER). The 137-residue stretch at 1333–1469 (YFEPVVPLPD…FDEAKTAQEK (137 aa)) folds into the RanBD1 2 domain. Polar residues predominate over residues 1580–1593 (NNSETSSVAQSGSE). The segment at 1580–1621 (NNSETSSVAQSGSESKVEPKKCELSKNSDIEQSSDSKVKNLS) is disordered. The span at 1594–1617 (SKVEPKKCELSKNSDIEQSSDSKV) shows a compositional bias: basic and acidic residues. In terms of domain architecture, GRIP spans 1702–1752 (REKSAANLEYLKNVLLQFIFLKPGSERERLLPVINTMLQLSPEEKGKLAAV).

Expressed in testis.

The protein resides in the cytoplasm. In Homo sapiens (Human), this protein is RANBP2-like and GRIP domain-containing protein 5/6 (RGPD5).